The primary structure comprises 94 residues: Co-chaperonin GroES (94 aa).

This sequence belongs to the GroES chaperonin family. As to quaternary structure, heptamer of 7 subunits arranged in a ring. Interacts with the chaperonin GroEL.

Its subcellular location is the cytoplasm. Functionally, together with the chaperonin GroEL, plays an essential role in assisting protein folding. The GroEL-GroES system forms a nano-cage that allows encapsulation of the non-native substrate proteins and provides a physical environment optimized to promote and accelerate protein folding. GroES binds to the apical surface of the GroEL ring, thereby capping the opening of the GroEL channel. The protein is Co-chaperonin GroES of Clostridium beijerinckii (strain ATCC 51743 / NCIMB 8052) (Clostridium acetobutylicum).